Reading from the N-terminus, the 151-residue chain is uncharacterized protein (151 aa).

Residues 1–48 (MRMAPTESTEGRRLWPGPREGGSGKETTSEKLSNLPRPHSYSPKRADA) form a disordered region.

This is an uncharacterized protein from Homo sapiens (Human).